Consider the following 165-residue polypeptide: Phosphopantetheine adenylyltransferase (165 aa).

Thr11 provides a ligand contact to substrate. ATP-binding positions include 11–12 (TF) and His19. Substrate is bound by residues Lys43, Thr79, and Arg93. Residues Glu104 and 128-134 (LEPLNST) each bind ATP.

This sequence belongs to the bacterial CoaD family. In terms of assembly, homohexamer. It depends on Mg(2+) as a cofactor.

It is found in the cytoplasm. The catalysed reaction is (R)-4'-phosphopantetheine + ATP + H(+) = 3'-dephospho-CoA + diphosphate. It participates in cofactor biosynthesis; coenzyme A biosynthesis; CoA from (R)-pantothenate: step 4/5. In terms of biological role, reversibly transfers an adenylyl group from ATP to 4'-phosphopantetheine, yielding dephospho-CoA (dPCoA) and pyrophosphate. The sequence is that of Phosphopantetheine adenylyltransferase from Lactococcus lactis subsp. lactis (strain IL1403) (Streptococcus lactis).